A 376-amino-acid chain; its full sequence is Anhydro-N-acetylmuramic acid kinase (376 aa).

16–23 (GTSMDGVD) contacts ATP.

It belongs to the anhydro-N-acetylmuramic acid kinase family.

It carries out the reaction 1,6-anhydro-N-acetyl-beta-muramate + ATP + H2O = N-acetyl-D-muramate 6-phosphate + ADP + H(+). It functions in the pathway amino-sugar metabolism; 1,6-anhydro-N-acetylmuramate degradation. It participates in cell wall biogenesis; peptidoglycan recycling. Its function is as follows. Catalyzes the specific phosphorylation of 1,6-anhydro-N-acetylmuramic acid (anhMurNAc) with the simultaneous cleavage of the 1,6-anhydro ring, generating MurNAc-6-P. Is required for the utilization of anhMurNAc either imported from the medium or derived from its own cell wall murein, and thus plays a role in cell wall recycling. This Paraburkholderia xenovorans (strain LB400) protein is Anhydro-N-acetylmuramic acid kinase.